The chain runs to 487 residues: 3-octaprenyl-4-hydroxybenzoate carboxy-lyase (487 aa).

Asn172 provides a ligand contact to Mn(2+). Prenylated FMN contacts are provided by residues 175-177, 189-191, and 194-195; these read IYR, RWL, and RG. A Mn(2+)-binding site is contributed by Glu238. The active-site Proton donor is the Asp287.

The protein belongs to the UbiD family. In terms of assembly, homohexamer. The cofactor is prenylated FMN. Mn(2+) is required as a cofactor.

The protein localises to the cell membrane. The enzyme catalyses a 4-hydroxy-3-(all-trans-polyprenyl)benzoate + H(+) = a 2-(all-trans-polyprenyl)phenol + CO2. It functions in the pathway cofactor biosynthesis; ubiquinone biosynthesis. Catalyzes the decarboxylation of 3-octaprenyl-4-hydroxy benzoate to 2-octaprenylphenol, an intermediate step in ubiquinone biosynthesis. This Nitrosospira multiformis (strain ATCC 25196 / NCIMB 11849 / C 71) protein is 3-octaprenyl-4-hydroxybenzoate carboxy-lyase.